The primary structure comprises 251 residues: Triosephosphate isomerase (251 aa).

A substrate-binding site is contributed by Asn9–Lys11. His95 acts as the Electrophile in catalysis. Glu167 acts as the Proton acceptor in catalysis. Substrate contacts are provided by residues Gly173, Ser212, and Gly233–Gly234.

Belongs to the triosephosphate isomerase family. In terms of assembly, homodimer.

It localises to the cytoplasm. It carries out the reaction D-glyceraldehyde 3-phosphate = dihydroxyacetone phosphate. It participates in carbohydrate biosynthesis; gluconeogenesis. It functions in the pathway carbohydrate degradation; glycolysis; D-glyceraldehyde 3-phosphate from glycerone phosphate: step 1/1. Involved in the gluconeogenesis. Catalyzes stereospecifically the conversion of dihydroxyacetone phosphate (DHAP) to D-glyceraldehyde-3-phosphate (G3P). This Ectopseudomonas mendocina (strain ymp) (Pseudomonas mendocina) protein is Triosephosphate isomerase.